The sequence spans 152 residues: Small ribosomal subunit protein bS6 (152 aa).

Belongs to the bacterial ribosomal protein bS6 family.

Binds together with bS18 to 16S ribosomal RNA. The polypeptide is Small ribosomal subunit protein bS6 (Bdellovibrio bacteriovorus (strain ATCC 15356 / DSM 50701 / NCIMB 9529 / HD100)).